Here is a 1666-residue protein sequence, read N- to C-terminus: Probable clathrin heavy chain (1666 aa).

WD40-like repeat stretches follow at residues 24–67 (SFGF…RPIS), 68–107 (ADSVILHPKKKIIALKAQRQLQVFDLEAKAKINSYVMNQD), 108–148 (VVYW…SSLN), 149–194 (GTQI…QPLE), 195–255 (SHAS…PEAV), 256–299 (NDFP…VSGE), and 300–328 (SIFVTTAHKSVNGLMAINRKGQVLSVSIN). Thr-392 is modified (phosphothreonine). Ser-393 carries the post-translational modification Phosphoserine. CHCR repeat units follow at residues 534-680 (MFNS…QIVV), 683-825 (ATRY…DEEL), 830-969 (LMSV…LLDQ), 975-1120 (VPES…IPDA), 1124-1265 (YLKA…FRLA), 1270-1415 (LNLI…MLLT), and 1418-1561 (LAAL…YECF).

Belongs to the clathrin heavy chain family. Clathrin triskelions, composed of 3 heavy chains and 3 light chains, are the basic subunits of the clathrin coat.

It is found in the cytoplasmic vesicle membrane. The protein localises to the membrane. The protein resides in the coated pit. Functionally, clathrin is the major protein of the polyhedral coat of coated pits and vesicles. The chain is Probable clathrin heavy chain (chc1) from Schizosaccharomyces pombe (strain 972 / ATCC 24843) (Fission yeast).